The sequence spans 507 residues: AMSH-like ubiquitin thioesterase 1 (507 aa).

The region spanning 333–463 (LHIATSMMDT…IFRLTTPGGM (131 aa)) is the MPN domain. 7 residues coordinate Zn(2+): H411, H413, D424, H426, C469, H475, and H477. The JAMM motif motif lies at 411-424 (HTHPTQSCFMSSID).

This sequence belongs to the peptidase M67C family. Zn(2+) is required as a cofactor.

It is found in the membrane. The protein localises to the cytoplasm. Zinc metalloprotease that cleaves 'Lys-48'- and 'Lys-63'-linked polyubiquitin chains. This Arabidopsis thaliana (Mouse-ear cress) protein is AMSH-like ubiquitin thioesterase 1 (AMSH1).